A 172-amino-acid polypeptide reads, in one-letter code: 3-hydroxydecanoyl-[acyl-carrier-protein] dehydratase (172 aa).

Histidine 71 is an active-site residue.

Belongs to the thioester dehydratase family. FabA subfamily. In terms of assembly, homodimer.

It localises to the cytoplasm. It catalyses the reaction a (3R)-hydroxyacyl-[ACP] = a (2E)-enoyl-[ACP] + H2O. The enzyme catalyses (3R)-hydroxydecanoyl-[ACP] = (2E)-decenoyl-[ACP] + H2O. The catalysed reaction is (2E)-decenoyl-[ACP] = (3Z)-decenoyl-[ACP]. It functions in the pathway lipid metabolism; fatty acid biosynthesis. Functionally, necessary for the introduction of cis unsaturation into fatty acids. Catalyzes the dehydration of (3R)-3-hydroxydecanoyl-ACP to E-(2)-decenoyl-ACP and then its isomerization to Z-(3)-decenoyl-ACP. Can catalyze the dehydratase reaction for beta-hydroxyacyl-ACPs with saturated chain lengths up to 16:0, being most active on intermediate chain length. The sequence is that of 3-hydroxydecanoyl-[acyl-carrier-protein] dehydratase from Escherichia coli (strain SE11).